Here is a 394-residue protein sequence, read N- to C-terminus: tRNA-specific 2-thiouridylase MnmA (394 aa).

ATP-binding positions include 13–20 (GLSGGVDS) and Met-39. Residues 99–101 (NPD) form an interaction with target base in tRNA region. The active-site Nucleophile is Cys-104. A disulfide bond links Cys-104 and Cys-202. Gly-128 contacts ATP. The tract at residues 152–154 (KDQ) is interaction with tRNA. Residue Cys-202 is the Cysteine persulfide intermediate of the active site. An interaction with tRNA region spans residues 329 to 330 (RY).

Belongs to the MnmA/TRMU family.

Its subcellular location is the cytoplasm. The enzyme catalyses S-sulfanyl-L-cysteinyl-[protein] + uridine(34) in tRNA + AH2 + ATP = 2-thiouridine(34) in tRNA + L-cysteinyl-[protein] + A + AMP + diphosphate + H(+). In terms of biological role, catalyzes the 2-thiolation of uridine at the wobble position (U34) of tRNA, leading to the formation of s(2)U34. This is tRNA-specific 2-thiouridylase MnmA from Polaromonas naphthalenivorans (strain CJ2).